Here is a 390-residue protein sequence, read N- to C-terminus: Putative methylesterase 11, chloroplastic (390 aa).

A chloroplast-targeting transit peptide spans 1-46 (MGNLCSLFTPPKPVKKRKPITKRQSSIGASSSGSGLNSNRWNNRVR). 2 disordered regions span residues 1–52 (MGNL…SSRR) and 94–119 (QGSC…DPLL). Positions 25–48 (SSIGASSSGSGLNSNRWNNRVRSS) are enriched in low complexity. A compositionally biased stretch (polar residues) spans 94 to 104 (QGSCSKKNQLP). The segment covering 105–114 (RSSSSRSRSS) has biased composition (low complexity). An AB hydrolase-1 domain is found at 137–241 (NHFVLVHGGS…KAVFLAAAML (105 aa)). D213 acts as the Acyl-ester intermediate in catalysis. Catalysis depends on charge relay system residues D339 and H367.

This sequence belongs to the AB hydrolase superfamily. Methylesterase family.

The protein resides in the plastid. Its subcellular location is the chloroplast. In terms of biological role, putative methylesterase. In Arabidopsis thaliana (Mouse-ear cress), this protein is Putative methylesterase 11, chloroplastic.